Consider the following 156-residue polypeptide: Protein eva-1 homolog A (156 aa).

Residues 40–60 (ALYFVSGVCIGLFLTLAALVM) form a helical membrane-spanning segment. Residues 79–100 (DRECSDSSDSEDGSEDTASDLS) are disordered. Acidic residues predominate over residues 84-96 (DSSDSEDGSEDTA). A Phosphothreonine modification is found at T110. S118 is subject to Phosphoserine.

The protein belongs to the EVA1 family.

It is found in the endoplasmic reticulum membrane. The protein resides in the lysosome membrane. Its function is as follows. Acts as a regulator of programmed cell death, mediating both autophagy and apoptosis. The polypeptide is Protein eva-1 homolog A (Eva1a) (Mus musculus (Mouse)).